Consider the following 295-residue polypeptide: MTETASTRASFVIGDEAAARRVTDLLGESFDDGELAIAAFERPDRSWEVSLHFGEMPNLDGVRALVAQAAGDAAAAAMTVESIAAKDWVAASLEGLVPVPAGRFVVHGSHDRARIPSNKLGIEIEAALAFGTGHHGTTRGCLTLLDLVLRAGPPRSVLDLGTGTGVLAIAAAKALRQPVLATDIDRQSVAVAKENARLNGVGNLVEAVHATGFSAPVFAAWGPFDLVLANILANPLRQLSTPMSQHLAPSALVILSGLLQPQAQSVIAAYRARGCVLLRQIVIEGWSSLLLAKTF.

Residues T138, G161, D183, and N230 each contribute to the S-adenosyl-L-methionine site.

The protein belongs to the methyltransferase superfamily. PrmA family.

The protein resides in the cytoplasm. The catalysed reaction is L-lysyl-[protein] + 3 S-adenosyl-L-methionine = N(6),N(6),N(6)-trimethyl-L-lysyl-[protein] + 3 S-adenosyl-L-homocysteine + 3 H(+). Its function is as follows. Methylates ribosomal protein L11. The sequence is that of Ribosomal protein L11 methyltransferase from Rhodopseudomonas palustris (strain BisB5).